Consider the following 80-residue polypeptide: Putative membrane protein insertion efficiency factor (80 aa).

The protein belongs to the UPF0161 family.

The protein resides in the cell membrane. Could be involved in insertion of integral membrane proteins into the membrane. In Shouchella clausii (strain KSM-K16) (Alkalihalobacillus clausii), this protein is Putative membrane protein insertion efficiency factor.